The sequence spans 214 residues: Large ribosomal subunit protein uL3 (214 aa).

Positions 136-156 are disordered; the sequence is THGNSLSHRAPGSIGQNQTPG. Q153 is subject to N5-methylglutamine.

Belongs to the universal ribosomal protein uL3 family. As to quaternary structure, part of the 50S ribosomal subunit. Forms a cluster with proteins L14 and L19. Methylated by PrmB.

One of the primary rRNA binding proteins, it binds directly near the 3'-end of the 23S rRNA, where it nucleates assembly of the 50S subunit. This is Large ribosomal subunit protein uL3 from Thioalkalivibrio sulfidiphilus (strain HL-EbGR7).